We begin with the raw amino-acid sequence, 241 residues long: Phosphoglycolate phosphatase (241 aa).

Catalysis depends on Asp8, which acts as the Nucleophile. Residues Asp8, Asp10, and Asp174 each contribute to the Mg(2+) site.

The protein belongs to the HAD-like hydrolase superfamily. CbbY/CbbZ/Gph/YieH family. It depends on Mg(2+) as a cofactor.

It carries out the reaction 2-phosphoglycolate + H2O = glycolate + phosphate. It functions in the pathway organic acid metabolism; glycolate biosynthesis; glycolate from 2-phosphoglycolate: step 1/1. Its function is as follows. Specifically catalyzes the dephosphorylation of 2-phosphoglycolate. Is involved in the dissimilation of the intracellular 2-phosphoglycolate formed during the DNA repair of 3'-phosphoglycolate ends, a major class of DNA lesions induced by oxidative stress. This Rhodospirillum rubrum (strain ATCC 11170 / ATH 1.1.1 / DSM 467 / LMG 4362 / NCIMB 8255 / S1) protein is Phosphoglycolate phosphatase.